Reading from the N-terminus, the 103-residue chain is Histone H4 (103 aa).

The segment covering 1-14 (MSGRGKGGKGLGKG) has biased composition (gly residues). Residues 1–20 (MSGRGKGGKGLGKGGAKRHR) form a disordered region. Serine 2 bears the N-acetylserine mark. Lysine 17 is subject to N6-acetyllysine. Residues 17–21 (KRHRK) mediate DNA binding. An N6-methyllysine modification is found at lysine 21.

The protein belongs to the histone H4 family. The nucleosome is a histone octamer containing two molecules each of H2A, H2B, H3 and H4 assembled in one H3-H4 heterotetramer and two H2A-H2B heterodimers. The octamer wraps approximately 147 bp of DNA.

It localises to the nucleus. The protein resides in the chromosome. Core component of nucleosome. Nucleosomes wrap and compact DNA into chromatin, limiting DNA accessibility to the cellular machineries which require DNA as a template. Histones thereby play a central role in transcription regulation, DNA repair, DNA replication and chromosomal stability. DNA accessibility is regulated via a complex set of post-translational modifications of histones, also called histone code, and nucleosome remodeling. The chain is Histone H4 from Capsicum annuum (Capsicum pepper).